Reading from the N-terminus, the 228-residue chain is Odorant-binding protein 47 (228 aa).

6 cysteine pairs are disulfide-bonded: Cys-60–Cys-225, Cys-73–Cys-215, Cys-74–Cys-204, Cys-88–Cys-114, Cys-110–Cys-185, and Cys-158–Cys-195. A glycan (N-linked (GlcNAc...) asparagine) is linked at Asn-117.

This sequence belongs to the PBP/GOBP family. Post-translationally, glycosylated. Head without antennae (at protein level).

It is found in the secreted. In terms of biological role, present in the aqueous fluid surrounding olfactory sensory dendrites and are thought to aid in the capture and transport of hydrophobic odorants into and through this fluid. Binds N-phenyl-1-naphthylamine, menthol, citronellal, 1-dodecanol, decanal, p-tert-butylbenzophenone, 4-hydroxy-4'-isopropylazobenzene, 2-pyrrolyl-p-methyl-azobenzene and indole. Expressed in mosquito head but barely detectable in antennae, which suggests that it may be present in mouth structures, such as palpi and proboscis, and may have a function in taste. The chain is Odorant-binding protein 47 from Anopheles gambiae (African malaria mosquito).